A 276-amino-acid polypeptide reads, in one-letter code: Transmembrane protein 81 (276 aa).

An N-terminal signal peptide occupies residues 1-24 (MKTSATSFIPGSLVLAFCLPVVAT). The Extracellular portion of the chain corresponds to 25–225 (SPKTLAIPEK…QHPPWKKKVA (201 aa)). The N-linked (GlcNAc...) asparagine glycan is linked to Asn45. The region spanning 83–176 (TNWLCGMLHF…NLRLVKRLYF (94 aa)) is the Ig-like domain. Cysteines 104 and 160 form a disulfide. Asn211 carries an N-linked (GlcNAc...) asparagine glycan. A helical transmembrane segment spans residues 226–246 (IAVGIGVAGGVTGGVLVSIVL). Topologically, residues 247-276 (CGRLSVIHSSASLETLQALLPKGGMLRKPD) are cytoplasmic.

As to quaternary structure, forms a complex with IZUMO1 and SPACA6 on spermatocyte cell membrane required for fertilization.

The protein resides in the cell membrane. In terms of biological role, essential fertilization factor required for male fertility. Part of a conserved trimeric sperm complex with the essential fertilization factors IZUMO1 and SPACA6 which bridges sperm and oocyte membranes during fertilization by binding to IZUMO1R/JUNO on the oocyte. This chain is Transmembrane protein 81 (TMEM81), found in Bos taurus (Bovine).